Here is a 66-residue protein sequence, read N- to C-terminus: Beta-toxin Cbo1 (66 aa).

An LCN-type CS-alpha/beta domain is found at 1–66 (KEGYLVNHST…VWPLPKKTCN (66 aa)). 4 disulfide bridges follow: Cys-12–Cys-65, Cys-16–Cys-41, Cys-25–Cys-46, and Cys-29–Cys-48. Asn-66 is subject to Asparagine amide.

Belongs to the long (4 C-C) scorpion toxin superfamily. Sodium channel inhibitor family. Beta subfamily. As to expression, expressed by the venom gland.

The protein resides in the secreted. Beta toxins bind voltage-independently at site-4 of sodium channels and shift the voltage of activation toward more negative potentials thereby affecting sodium channel activation and promoting spontaneous and repetitive firing. Is active on the human voltage-gated sodium channel Nav1.6/SCN8A when tested at 200 nM. In vivo, is toxic to mice when intraperitoneally injected. This is Beta-toxin Cbo1 from Centruroides bonito (Scorpion).